The chain runs to 307 residues: Taste receptor type 2 member 10 (307 aa).

Topologically, residues 1–6 are extracellular; that stretch reads MLRVVE. Residues 7-27 traverse the membrane as a helical segment; sequence GIFIFVVISEXVFGVLGNGFI. Residues 28 to 42 are Cytoplasmic-facing; that stretch reads GLVNCIDCAKNKLST. A helical transmembrane segment spans residues 43–63; that stretch reads IGFILTGLAISRIFLIWIIIT. At 64–100 the chain is on the extracellular side; that stretch reads DGFIQIFSPDIYASGNLIEYISYFWVIGNQSSMWFAT. N-linked (GlcNAc...) asparagine glycosylation is present at asparagine 92. The helical transmembrane segment at 101–121 threads the bilayer; it reads SLSIFYFLKIANFSNYIFLWL. Residues 122-126 are Cytoplasmic-facing; sequence KSRTN. Residues 127 to 147 form a helical membrane-spanning segment; that stretch reads MVLPFMIVFLLISSLLNFAHI. The Extracellular segment spans residues 148–179; that stretch reads AKILNDYKMKNDTVWDLNMYKSEYFIKQILLN. An N-linked (GlcNAc...) asparagine glycan is attached at asparagine 158. Residues 180–200 form a helical membrane-spanning segment; that stretch reads LGVIFFFTLSLITCVFLIISL. At 201–227 the chain is on the cytoplasmic side; the sequence is WRHNRQMQSNVTGLRDSNTEAHVKAMK. Residues 228–248 traverse the membrane as a helical segment; it reads VLISFXILFILYFIGMAIEIS. Topologically, residues 249–257 are extracellular; the sequence is CFTVRENKL. Residues 258 to 278 traverse the membrane as a helical segment; sequence LLMFGMTTTAIYPWGHSFILI. Topologically, residues 279–307 are cytoplasmic; it reads LGNSKLKQASLRVLQQLKCCEKRKNLRVT.

The protein belongs to the G-protein coupled receptor T2R family.

The protein localises to the membrane. Receptor that may play a role in the perception of bitterness and is gustducin-linked. May play a role in sensing the chemical composition of the gastrointestinal content. The activity of this receptor may stimulate alpha gustducin, mediate PLC-beta-2 activation and lead to the gating of TRPM5. The polypeptide is Taste receptor type 2 member 10 (TAS2R10) (Gorilla gorilla gorilla (Western lowland gorilla)).